Here is a 390-residue protein sequence, read N- to C-terminus: MADIDNKEQSELDQDLEDVEEVEEEETGEETKIKARQLTVQMMQNPQILAALQERLDGLVDTPTGYIESLPKVVKRRVNALKNLQVKCAQIEAKFYEEVHDLERKYAVLYQPLFDKRFEIINAIYEPTEEECEWKPDEEDEVSEELKEKAKIEDEKKDEEKEDPKGIPEFWLTVFKNDLLSDMVQEHDEPILKHLKDIKVKFSDAGQPMSFILEFHFEPNEYFTNEVLTKTYRMRSEPDDSDPFSFDGPEIMGCTGCQIDWKKGKNVTLKTIKKKQKHKGRGTVRTVTKTVSKTSFFNFFAPPEVPENGDLDDDXEAILAADFEIGHFLRERIIPRSVLYFTGEAIEDDDDDYDEEGEEADEEGEEEGDEENDPDYDPKKDQNPAECKQQ.

Basic and acidic residues predominate over residues 1–10; that stretch reads MADIDNKEQS. Residues 1-32 form a disordered region; the sequence is MADIDNKEQSELDQDLEDVEEVEEEETGEETK. At alanine 2 the chain carries N-acetylalanine. Serine 10 carries the post-translational modification Phosphoserine. Residues 11–28 show a composition bias toward acidic residues; the sequence is ELDQDLEDVEEVEEEETG. A phosphothreonine mark is found at threonine 62 and threonine 64. A Phosphoserine modification is found at serine 69. An N6-acetyllysine modification is found at lysine 116. The NAP1L motif signature appears at 125–150; that stretch reads YEPTEEECEWKPDEEDEVSEELKEKA. Over residues 131–143 the composition is skewed to acidic residues; sequence ECEWKPDEEDEVS. A disordered region spans residues 131 to 163; sequence ECEWKPDEEDEVSEELKEKAKIEDEKKDEEKED. Serine 143 carries the phosphoserine modification. Over residues 144-163 the composition is skewed to basic and acidic residues; the sequence is EELKEKAKIEDEKKDEEKED. The Nuclear localization signal signature appears at 272–278; sequence IKKKQKH. Over residues 345–375 the composition is skewed to acidic residues; that stretch reads AIEDDDDDYDEEGEEADEEGEEEGDEENDPD. The segment at 345 to 390 is disordered; the sequence is AIEDDDDDYDEEGEEADEEGEEEGDEENDPDYDPKKDQNPAECKQQ. A 5-glutamyl polyglycine mark is found at glutamate 358 and glutamate 359. A compositionally biased stretch (basic and acidic residues) spans 376-390; sequence YDPKKDQNPAECKQQ. Position 387 is a cysteine methyl ester (cysteine 387). Cysteine 387 carries S-farnesyl cysteine lipidation. The propeptide at 388–390 is removed in mature form; it reads KQQ.

Belongs to the nucleosome assembly protein (NAP) family. In terms of assembly, homodimer. The dimer binds strongly and sequentially to single and double H2A-H2B heterodimers. Interacts with ERCC6; this interaction increases ERCC6 processivity. Interacts with RAD54. Interacts with SETD1A. Post-translationally, polyglycylated by TTLL10 on glutamate residues, resulting in polyglycine chains on the gamma-carboxyl group. Both polyglutamylation and polyglycylation modifications can coexist on the same protein on adjacent residues, and lowering polyglycylation levels increases polyglutamylation, and reciprocally. In terms of processing, polyglutamylated by TTLL4 on glutamate residues, resulting in polyglutamate chains on the gamma-carboxyl group. Both polyglutamylation and polyglycylation modifications can coexist on the same protein on adjacent residues, and lowering polyglycylation levels increases polyglutamylation, and reciprocally.

The protein resides in the nucleus. Its subcellular location is the melanosome. It localises to the cytoplasm. Functionally, histone chaperone that plays a role in the nuclear import of H2A-H2B and nucleosome assembly. Also participates in several important DNA repair mechanisms: greatly enhances ERCC6-mediated chromatin remodeling which is essential for transcription-coupled nucleotide excision DNA repair. Also stimulates homologous recombination (HR) by RAD51 and RAD54 which is essential in mitotic DNA double strand break (DSB) repair. Plays a key role in the regulation of embryonic neurogenesis. Promotes the proliferation of neural progenitors and inhibits neuronal differentiation during cortical development. Regulates neurogenesis via the modulation of RASSF10; regulates RASSF10 expression by promoting SETD1A-mediated H3K4 methylation at the RASSF10 promoter. This Rattus norvegicus (Rat) protein is Nucleosome assembly protein 1-like 1 (Nap1l1).